The chain runs to 454 residues: Probable tRNA methyltransferase 9B (454 aa).

Ser-214 bears the Phosphoserine mark.

It belongs to the methyltransferase superfamily. Down-regulated in breast, bladder, colorectal, cervix and testicular carcinomas.

Its function is as follows. May modify wobble uridines in specific arginine and glutamic acid tRNAs. Acts as a tumor suppressor by promoting the expression of LIN9. The protein is Probable tRNA methyltransferase 9B of Homo sapiens (Human).